A 1469-amino-acid polypeptide reads, in one-letter code: MDVDAEREKITQEIKELERILDPGSSGSHVEISESSLESDSEADSLPSEDLDPADPPISEEERWGEASNDEDDPKDKTLPEDPETCLQLNMVYQEVIQEKLAEANLLLAQNREQQEELMRDLAGSKGTKVKDGKSLPPSTYMGHFMKPYFKDKVTGVGPPANEDTREKAAQGIKAFEELLVTKWKNWEKALLRKSVVSDRLQRLLQPKLLKLEYLHQKQSKVSSELERQALEKQGREAEKEIQDINQLPEEALLGNRLDSHDWEKISNINFEGSRSAEEIRKFWQNSEHPSINKQEWSREEEERLQAIAAAHGHLEWQKIAEELGTSRSAFQCLQKFQQHNKALKRKEWTEEEDRMLTQLVQEMRVGSHIPYRRIVYYMEGRDSMQLIYRWTKSLDPGLKKGYWAPEEDAKLLQAVAKYGEQDWFKIREEVPGRSDAQCRDRYLRRLHFSLKKGRWNLKEEEQLIELIEKYGVGHWAKIASELPHRSGSQCLSKWKIMMGKKQGLRRRRRRARHSVRWSSTSSSGSSSGSSGGSSSSSSSSSEEDEPEQAQAGEGDRALLSPQYMVPDMDLWVPARQSTSQPWRGGAGAWLGGPAASLSPPKGSSASQGGSKEASTTAAAPGEETSPVQVPARAHGPVPRSAQASHSADTRPAGAEKQALEGGRRLLTVPVETVLRVLRANTAARSCTQKEQLRQPPLPTSSPGVSSGDSVARSHVQWLRHRATQSGQRRWRHALHRRLLNRRLLLAVTPWVGDVVVPCTQASQRPAVVQTQADGLREQLQQARLASTPVFTLFTQLFHIDTAGCLEVVRERKALPPRLPQAGARDPPVHLLQASSSAQSTPGHLFPNVPAQEASKSASHKGSRRLASSRVERTLPQASLLASTGPRPKPKTVSELLQEKRLQEARAREATRGPVVLPSQLLVSSSVILQPPLPHTPHGRPAPGPTVLNVPLSGPGAPAAAKPGTSGSWQEAGTSAKDKRLSTMQALPLAPVFSEAEGTAPAASQAPALGPGQISVSCPESGLGQSQAPAASRKQGLPEAPPFLPAAPSPTPLPVQPLSLTHIGGPHVATSVPLPVTWVLTAQGLLPVPVPAVVSLPRPAGTPGPAGLLATLLPPLTETRAAQGPRAPALSSSWQPPANMNREPEPSCRTDTPAPPTHALSQSPAEADGSVAFVPGEAQVAREIPEPRTSSHADPPEAEPPWSGRLPAFGGVIPATEPRGTPGSPSGTQEPRGPLGLEKLPLRQPGPEKGALDLEKPPLPQPGPEKGALDLGLLSQEGEAATQQWLGGQRGVRVPLLGSRLPYQPPALCSLRALSGLLLHKKALEHKATSLVVGGEAERPAGALQASLGLVRGQLQDNPAYLLLRARFLAAFTLPALLATLAPQGVRTTLSVPSRVGSESEDEDLLSELELADRDGQPGCTTATCPIQGAPDSGKCSASSCLDTSNDPDDLDVLRTRHARHTRKRRRLV.

Residues 16–82 form a disordered region; that stretch reads ELERILDPGS…DPKDKTLPED (67 aa). Low complexity predominate over residues 24-36; sequence GSSGSHVEISESS. The segment covering 37-53 has biased composition (acidic residues); it reads LESDSEADSLPSEDLDP. Ser68 is subject to Phosphoserine. The segment at 84–133 is SNAPC5-binding; it reads ETCLQLNMVYQEVIQEKLAEANLLLAQNREQQEELMRDLAGSKGTKVKDG. A Myb-like 1 domain is found at 250 to 288; that stretch reads EEALLGNRLDSHDWEKISNINFEGSRSAEEIRKFWQNSE. The region spanning 289–343 is the HTH myb-type 1 domain; it reads HPSINKQEWSREEEERLQAIAAAHGHLEWQKIAEELGTSRSAFQCLQKFQQHNKA. The H-T-H motif DNA-binding region spans 317–341; the sequence is WQKIAEELGTSRSAFQCLQKFQQHN. The region spanning 344–395 is the Myb-like 2 domain; it reads LKRKEWTEEEDRMLTQLVQEMRVGSHIPYRRIVYYMEGRDSMQLIYRWTKSL. 2 HTH myb-type domains span residues 396–451 and 452–503; these read DPGL…HFSL and KKGR…GKKQ. 2 DNA-binding regions (H-T-H motif) span residues 424 to 447 and 476 to 499; these read WFKIREEVPGRSDAQCRDRYLRRL and WAKIASELPHRSGSQCLSKWKIMM. Disordered stretches follow at residues 501-558, 577-661, 685-710, 834-894, 932-981, 1001-1051, 1121-1167, and 1184-1266; these read KKQG…GDRA, QSTS…QALE, RSCTQKEQLRQPPLPTSSPGVSSGDS, ASSS…KTVS, PLPH…DKRL, PAAS…PSPT, AAQG…PAEA, and IPEP…GPEK. Residues 503-516 show a composition bias toward basic residues; the sequence is QGLRRRRRRARHSV. Over residues 519-541 the composition is skewed to low complexity; the sequence is SSTSSSGSSSGSSGGSSSSSSSS. A Phosphoserine modification is found at Ser599. Positions 602-618 are enriched in polar residues; that stretch reads KGSSASQGGSKEASTTA. Position 626 is a phosphoserine (Ser626). The segment covering 932-944 has biased composition (pro residues); the sequence is PLPHTPHGRPAPG. Positions 951 to 968 are enriched in low complexity; the sequence is PLSGPGAPAAAKPGTSGS. The segment covering 1014–1029 has biased composition (polar residues); sequence ISVSCPESGLGQSQAP. The span at 1039 to 1051 shows a compositional bias: pro residues; the sequence is EAPPFLPAAPSPT. The residue at position 1157 (Thr1157) is a Phosphothreonine. The segment covering 1184 to 1195 has biased composition (basic and acidic residues); that stretch reads IPEPRTSSHADP. Residue Ser1224 is modified to Phosphoserine. The tract at residues 1281 to 1393 is SNAPC2-binding; sequence ATQQWLGGQR…QGVRTTLSVP (113 aa). Ser1398, Ser1400, and Ser1440 each carry phosphoserine. Residues 1430–1449 are disordered; it reads APDSGKCSASSCLDTSNDPD. The segment covering 1436 to 1445 has biased composition (polar residues); that stretch reads CSASSCLDTS.

As to quaternary structure, part of the SNAPc complex composed of 5 subunits: SNAPC1, SNAPC2, SNAPC3, SNAPC4 and SNAPC5. SNAPC4 interacts with SNAPC1, SNAPC2, SNAPC5, BRF2 and TBP.

It is found in the nucleus. Functionally, part of the SNAPc complex required for the transcription of both RNA polymerase II and III small-nuclear RNA genes. Binds to the proximal sequence element (PSE), a non-TATA-box basal promoter element common to these 2 types of genes. Recruits TBP and BRF2 to the U6 snRNA TATA box. The polypeptide is snRNA-activating protein complex subunit 4 (Homo sapiens (Human)).